Here is a 31-residue protein sequence, read N- to C-terminus: Sarcolipin (31 aa).

Topologically, residues 1–7 (MERSTQE) are cytoplasmic. Residues 8-26 (LFINFTVVLITVLLMWLLV) traverse the membrane as a helical segment. The Lumenal segment spans residues 27–31 (RSYQY).

The protein belongs to the sarcolipin family. As to quaternary structure, homooligomer. Can also form heterooligomers with other sarcoplasmic/endoplasmic reticulum calcium ATPase (SERCA) regulators ARLN, ERLN, PLN and STRIT1/DWORF. Monomer. Interacts with calcium ATPase ATP2A1/SERCA1. Interacts as a monomer with ATP2A2/SERCA2; the interaction decreases ATP2A2 Ca(2+) affinity. Interacts with VMP1; VMP1 competes with PLN and SLN to prevent them from forming an inhibitory complex with ATP2A2.

It localises to the sarcoplasmic reticulum membrane. The protein resides in the endoplasmic reticulum membrane. Reversibly inhibits the activity of ATP2A1/SERCA1 and ATP2A2/SERCA2 in sarcoplasmic reticulum by decreasing the apparent affinity of the ATPase for Ca(2+). Also inhibits the activity of ATP2A3/SERCA3. Modulates calcium re-uptake during muscle relaxation and plays an important role in calcium homeostasis in muscle. Required for muscle-based, non-shivering thermogenesis. In Rattus norvegicus (Rat), this protein is Sarcolipin (Sln).